A 242-amino-acid polypeptide reads, in one-letter code: MRFTLYPAIDLKDGQCVRLRRGEMEDATIYGNDPAVRARQWQDAGFAWLHVVDLNGAFAGRSENAEAITAILGAVSVPVQLGGGIRDMAAVERWIEAGISRVILGSAAVKTPQLVKDACRAFPGRIAVGIDARDGFVATEGWAETSSVAAVELAARFEDEGVAAIIYTDIGRDGMLTGPNVEQTLALARATTIPVIASGGVGDLSHIVDVYDAGTITGVILGRALYDGRVDPAAALQAVSLR.

Asp10 acts as the Proton acceptor in catalysis. Asp131 functions as the Proton donor in the catalytic mechanism.

Belongs to the HisA/HisF family.

The protein localises to the cytoplasm. The catalysed reaction is 1-(5-phospho-beta-D-ribosyl)-5-[(5-phospho-beta-D-ribosylamino)methylideneamino]imidazole-4-carboxamide = 5-[(5-phospho-1-deoxy-D-ribulos-1-ylimino)methylamino]-1-(5-phospho-beta-D-ribosyl)imidazole-4-carboxamide. It participates in amino-acid biosynthesis; L-histidine biosynthesis; L-histidine from 5-phospho-alpha-D-ribose 1-diphosphate: step 4/9. The protein is 1-(5-phosphoribosyl)-5-[(5-phosphoribosylamino)methylideneamino] imidazole-4-carboxamide isomerase of Granulibacter bethesdensis (strain ATCC BAA-1260 / CGDNIH1).